Here is a 508-residue protein sequence, read N- to C-terminus: Glycerol kinase (508 aa).

Position 14 (Thr-14) interacts with ADP. Residues Thr-14, Thr-15, and Ser-16 each contribute to the ATP site. Sn-glycerol 3-phosphate is bound at residue Thr-14. Position 18 (Arg-18) interacts with ADP. 3 residues coordinate sn-glycerol 3-phosphate: Arg-84, Glu-85, and Tyr-136. Glycerol is bound by residues Arg-84, Glu-85, and Tyr-136. Position 232 is a phosphohistidine; by HPr (His-232). Asp-246 serves as a coordination point for sn-glycerol 3-phosphate. Glycerol is bound by residues Asp-246 and Gln-247. Residues Thr-268 and Gly-311 each contribute to the ADP site. ATP-binding residues include Thr-268, Gly-311, Gln-315, and Gly-412. ADP contacts are provided by Gly-412 and Asn-416.

The protein belongs to the FGGY kinase family. As to quaternary structure, homotetramer and homodimer (in equilibrium). The phosphoenolpyruvate-dependent sugar phosphotransferase system (PTS), including enzyme I, and histidine-containing protein (HPr) are required for the phosphorylation, which leads to the activation of the enzyme.

It catalyses the reaction glycerol + ATP = sn-glycerol 3-phosphate + ADP + H(+). It participates in polyol metabolism; glycerol degradation via glycerol kinase pathway; sn-glycerol 3-phosphate from glycerol: step 1/1. With respect to regulation, activated by phosphorylation and inhibited by fructose 1,6-bisphosphate (FBP). Key enzyme in the regulation of glycerol uptake and metabolism. Catalyzes the phosphorylation of glycerol to yield sn-glycerol 3-phosphate. The sequence is that of Glycerol kinase from Streptococcus pyogenes serotype M4 (strain MGAS10750).